We begin with the raw amino-acid sequence, 161 residues long: Phosphopantetheine adenylyltransferase (161 aa).

S9 lines the substrate pocket. Residues 9 to 10 (SF) and H17 each bind ATP. Substrate contacts are provided by K41, T73, and R87. ATP-binding positions include 88-90 (GIR), E98, and 123-129 (YQYVSSS).

The protein belongs to the bacterial CoaD family. Homohexamer. Mg(2+) is required as a cofactor.

Its subcellular location is the cytoplasm. It catalyses the reaction (R)-4'-phosphopantetheine + ATP + H(+) = 3'-dephospho-CoA + diphosphate. Its pathway is cofactor biosynthesis; coenzyme A biosynthesis; CoA from (R)-pantothenate: step 4/5. Functionally, reversibly transfers an adenylyl group from ATP to 4'-phosphopantetheine, yielding dephospho-CoA (dPCoA) and pyrophosphate. The polypeptide is Phosphopantetheine adenylyltransferase (Levilactobacillus brevis (strain ATCC 367 / BCRC 12310 / CIP 105137 / JCM 1170 / LMG 11437 / NCIMB 947 / NCTC 947) (Lactobacillus brevis)).